A 371-amino-acid chain; its full sequence is MKMTFRWFGKEHDTVSLDHIRQIPGVEGIVGALYHIPVGEVWPLDDILELKRQVNEKGFHLEVIESVNVHEDIKLGLPSRDRYIENYKQTIRNLAKAGVKVICYNFMPIFDWTRSDLAKRRPDGSTVLAYEKQKIEQIDPEEMIRRIESGANGFLLPGWEPERLKTIKPLFSLYKGVTEEDLFDHLRYFLEQIVPVAEECGVRMALHPDDPPWSVFGLPRIATNKENLDRIVHMVNSPANGLTLCSGSLGANPANDVPDIFRHFLRMGRVPFAHVRNVEIHANGDFEETSHRSCDGSLNICEIMKALHEANFQGYIRPDHGRMIWGEQARPGYGLYDRALGIMYLLGIWDSLENEKKKQEGEKTCSRSIQV.

This sequence belongs to the mannonate dehydratase family. Fe(2+) is required as a cofactor. Mn(2+) serves as cofactor.

It catalyses the reaction D-mannonate = 2-dehydro-3-deoxy-D-gluconate + H2O. Its pathway is carbohydrate metabolism; pentose and glucuronate interconversion. Catalyzes the dehydration of D-mannonate. The chain is Mannonate dehydratase (uxuA) from Geobacillus stearothermophilus (Bacillus stearothermophilus).